Consider the following 153-residue polypeptide: UPF0756 membrane protein Lm4b_01579 (153 aa).

4 helical membrane passes run 6–26 (MLFLLLFLLLGLIAKNNSLII), 54–74 (WGVTIITVAILIPIATGQIGF), 80–100 (SFKSAAGWIGLGAGIAVSILA), and 117–137 (LVFGTILAVVLFRGIAAGPVI).

Belongs to the UPF0756 family.

Its subcellular location is the cell membrane. This chain is UPF0756 membrane protein Lm4b_01579, found in Listeria monocytogenes serotype 4b (strain CLIP80459).